The following is a 77-amino-acid chain: Large ribosomal subunit protein eL14 (77 aa).

This sequence belongs to the eukaryotic ribosomal protein eL14 family.

The polypeptide is Large ribosomal subunit protein eL14 (Methanococcus maripaludis (strain C7 / ATCC BAA-1331)).